A 450-amino-acid chain; its full sequence is Phosphoglucosamine mutase (450 aa).

The active-site Phosphoserine intermediate is the S102. Mg(2+) is bound by residues S102, D244, D246, and D248. Residue S102 is modified to Phosphoserine.

Belongs to the phosphohexose mutase family. Mg(2+) is required as a cofactor. Activated by phosphorylation.

It carries out the reaction alpha-D-glucosamine 1-phosphate = D-glucosamine 6-phosphate. Functionally, catalyzes the conversion of glucosamine-6-phosphate to glucosamine-1-phosphate. This is Phosphoglucosamine mutase from Nitratidesulfovibrio vulgaris (strain ATCC 29579 / DSM 644 / CCUG 34227 / NCIMB 8303 / VKM B-1760 / Hildenborough) (Desulfovibrio vulgaris).